The primary structure comprises 431 residues: Trigger factor (431 aa).

Positions 165 to 250 (TDTAVFDFEG…LHQIKTKKIP (86 aa)) constitute a PPIase FKBP-type domain.

The protein belongs to the FKBP-type PPIase family. Tig subfamily.

The protein resides in the cytoplasm. It catalyses the reaction [protein]-peptidylproline (omega=180) = [protein]-peptidylproline (omega=0). In terms of biological role, involved in protein export. Acts as a chaperone by maintaining the newly synthesized protein in an open conformation. Functions as a peptidyl-prolyl cis-trans isomerase. This Aster yellows witches'-broom phytoplasma (strain AYWB) protein is Trigger factor.